The following is a 326-amino-acid chain: MSKIRIGIVGYGNLGRGVEAAIQQNPDMELVAVFTRRDPKTVAVKSNVKVLHVDDAQSYKDEIDVMILCGGSATDLPEQGPYFAQYFNTIDSFDTHARIPDYFDAVNAAAEQSGKVAIISVGWDPGLFSLNRLLGEVVLPVGNTYTFWGKGVSQGHSDAIRRIQGVKNAVQYTIPIDEAVNRVRSGENPELSTREKHARECFVVLEEGADPAKVEHEIKTMPNYFDEYDTTVHFISEEELKQNHSGMPHGGFVIRSGKSDEGHKQIIEFSLNLESNPMFTSSALVAYARAAYRLSQNGDKGAKTVFDIPFGLLSPKSPEDLRKELL.

Residues 11–14 (YGNL), 35–37 (TRR), 69–72 (CGGS), 92–94 (SFD), and 121–125 (VGWDP) each bind NADP(+). Residues Asp94, Asp124, Trp148, 154 to 155 (QG), Thr173, Arg199, His249, and Asn276 contribute to the substrate site.

It belongs to the diaminopimelate dehydrogenase family. Homodimer.

The catalysed reaction is meso-2,6-diaminopimelate + NADP(+) + H2O = (S)-2-amino-6-oxoheptanedioate + NH4(+) + NADPH + H(+). Its pathway is amino-acid biosynthesis; L-lysine biosynthesis via DAP pathway; DL-2,6-diaminopimelate from (S)-tetrahydrodipicolinate: step 1/1. Its activity is regulated as follows. The enzyme is completely inhibited by p-chloromercuribenzoate and HgCl(2) in vitro. Thioglycollate, L-cysteine and Cu(2+) also strongly inhibit the enzyme. Catalyzes the reversible NADPH-dependent reductive amination of L-2-amino-6-oxopimelate, the acyclic form of L-tetrahydrodipicolinate, to generate the meso compound, D,L-2,6-diaminopimelate. Probably plays a role in lysine biosynthesis. Is highly specific for meso-2,6-diaminopimelate as the electron donor, since the following amino acids are inert for the oxidative deamination reaction: DL-2-aminopimelate, D-glutamate, L-glutamate, D-aspartate, L-aspartate, D-alanine, L-alanine, D-valine, L-valine, D-lysine, L-lysine, D-phenylalanine, L-phenylalanine, D-leucine, L-leucine, D-threonine, L-threonine, D-serine, L-serine, D-tryptophan, L-tryptophan, D-cysteine, L-cysteine, D-histidine, L-histidine, D-methionine, D-arginine, D-proline, D-asparagine, D-glutamine, D-isoleucine and D-ornithine. Moreover, exclusively uses NADP as the electron acceptor for the oxidative deamination of meso-DAP; NAD is inert. This Ureibacillus thermosphaericus protein is Meso-diaminopimelate D-dehydrogenase (ddh).